Consider the following 96-residue polypeptide: ESAT-6-like protein EsxR (96 aa).

The protein belongs to the WXG100 family. ESAT-6 subfamily.

It is found in the secreted. This Mycobacterium leprae (strain TN) protein is ESAT-6-like protein EsxR.